A 304-amino-acid polypeptide reads, in one-letter code: Glycine--tRNA ligase alpha subunit (304 aa).

The protein belongs to the class-II aminoacyl-tRNA synthetase family. Tetramer of two alpha and two beta subunits.

The protein resides in the cytoplasm. It carries out the reaction tRNA(Gly) + glycine + ATP = glycyl-tRNA(Gly) + AMP + diphosphate. The protein is Glycine--tRNA ligase alpha subunit of Streptococcus agalactiae serotype III (strain NEM316).